Consider the following 324-residue polypeptide: NADH-ubiquinone oxidoreductase chain 1 (324 aa).

Transmembrane regions (helical) follow at residues 9-29, 75-95, 106-126, 146-166, 177-197, 237-257, 259-279, and 299-319; these read VLNP…LTLL, FLFL…WAPM, LGVL…LGSG, ISYE…TGGF, SIWL…STLA, ILLM…IPAL, ELTA…FLWV, and FLPM…ALAG.

It belongs to the complex I subunit 1 family.

The protein resides in the mitochondrion inner membrane. The catalysed reaction is a ubiquinone + NADH + 5 H(+)(in) = a ubiquinol + NAD(+) + 4 H(+)(out). In terms of biological role, core subunit of the mitochondrial membrane respiratory chain NADH dehydrogenase (Complex I) that is believed to belong to the minimal assembly required for catalysis. Complex I functions in the transfer of electrons from NADH to the respiratory chain. The immediate electron acceptor for the enzyme is believed to be ubiquinone. The protein is NADH-ubiquinone oxidoreductase chain 1 (MT-ND1) of Thymallus arcticus (Arctic grayling).